Here is a 188-residue protein sequence, read N- to C-terminus: dCTP deaminase (188 aa).

Residues Lys-111 to Arg-116, Thr-135 to Glu-137, Gln-156, Tyr-170, and Gln-180 each bind dCTP. The Proton donor/acceptor role is filled by Glu-137.

It belongs to the dCTP deaminase family. As to quaternary structure, homotrimer.

It catalyses the reaction dCTP + H2O + H(+) = dUTP + NH4(+). The protein operates within pyrimidine metabolism; dUMP biosynthesis; dUMP from dCTP (dUTP route): step 1/2. In terms of biological role, catalyzes the deamination of dCTP to dUTP. The chain is dCTP deaminase from Francisella tularensis subsp. tularensis (strain FSC 198).